The sequence spans 250 residues: GTP cyclohydrolase 1 type 2 homolog (250 aa).

Positions 63, 64, 100, 218, and 222 each coordinate a divalent metal cation.

The protein belongs to the GTP cyclohydrolase I type 2/NIF3 family. As to quaternary structure, homohexamer.

This chain is GTP cyclohydrolase 1 type 2 homolog, found in Pyrococcus abyssi (strain GE5 / Orsay).